A 488-amino-acid chain; its full sequence is Inosine-5'-monophosphate dehydrogenase (488 aa).

CBS domains follow at residues 95–153 (VISN…SIKI) and 157–216 (MTQE…AKDE). NAD(+) is bound by residues Asp-250 and 300-302 (GIG). K(+) is bound by residues Gly-302 and Gly-304. Ser-305 is an IMP binding site. Cys-307 provides a ligand contact to K(+). Cys-307 acts as the Thioimidate intermediate in catalysis. IMP contacts are provided by residues 340–342 (DGG), 363–364 (GS), and 387–391 (YRGMG). The active-site Proton acceptor is the Arg-403. An IMP-binding site is contributed by Glu-417. Positions 468-488 (GLAESHPHNIQITKESPNYSF) are disordered. Positions 471, 472, and 473 each coordinate K(+). Polar residues predominate over residues 475-488 (HNIQITKESPNYSF).

The protein belongs to the IMPDH/GMPR family. Homotetramer. The cofactor is K(+).

The catalysed reaction is IMP + NAD(+) + H2O = XMP + NADH + H(+). It functions in the pathway purine metabolism; XMP biosynthesis via de novo pathway; XMP from IMP: step 1/1. Its activity is regulated as follows. Mycophenolic acid (MPA) is a non-competitive inhibitor that prevents formation of the closed enzyme conformation by binding to the same site as the amobile flap. In contrast, mizoribine monophosphate (MZP) is a competitive inhibitor that induces the closed conformation. MPA is a potent inhibitor of mammalian IMPDHs but a poor inhibitor of the bacterial enzymes. MZP is a more potent inhibitor of bacterial IMPDH. Its function is as follows. Catalyzes the conversion of inosine 5'-phosphate (IMP) to xanthosine 5'-phosphate (XMP), the first committed and rate-limiting step in the de novo synthesis of guanine nucleotides, and therefore plays an important role in the regulation of cell growth. The sequence is that of Inosine-5'-monophosphate dehydrogenase from Staphylococcus aureus (strain Mu50 / ATCC 700699).